The chain runs to 442 residues: Proline--tRNA ligase (442 aa).

The protein belongs to the class-II aminoacyl-tRNA synthetase family. ProS type 2 subfamily. Homodimer.

It localises to the cytoplasm. The enzyme catalyses tRNA(Pro) + L-proline + ATP = L-prolyl-tRNA(Pro) + AMP + diphosphate. Catalyzes the attachment of proline to tRNA(Pro) in a two-step reaction: proline is first activated by ATP to form Pro-AMP and then transferred to the acceptor end of tRNA(Pro). This chain is Proline--tRNA ligase, found in Brucella canis (strain ATCC 23365 / NCTC 10854 / RM-666).